The sequence spans 5430 residues: Microtubule-actin cross-linking factor 1 (5430 aa).

Residues 1–47 (MSSSDEETLSERSCRSERSCRSERSYRSERSGSLSPCPPGDTLPWNL) are disordered. The actin-binding stretch occupies residues 1 to 295 (MSSSDEETLS…VITYVSSIYD (295 aa)). Serine 4 is modified (phosphoserine). Basic and acidic residues predominate over residues 9–30 (LSERSCRSERSCRSERSYRSER). Serine 35 and serine 57 each carry phosphoserine. Calponin-homology (CH) domains are found at residues 78–181 (RVQK…LHFQ) and 194–298 (MSAK…DAFP). LRR repeat units lie at residues 148 to 171 (QRQV…LTLG) and 240 to 264 (LVDM…VAER). Serine 280 is subject to Phosphoserine. LRR repeat units lie at residues 377–399 (LYKL…YHPN) and 441–464 (LNCE…LESG). The region spanning 868 to 925 (KSTLSVKAICDYRQIEITICKNDECVLEDNSQRTKWKVISPTGNEAMVPSVCLLIPPP) is the SH3 domain. The LRR 5 repeat unit spans residues 1050–1073 (ISELKNIRLRLEECEQRLLKQIQS). Serine 1122 is subject to Phosphoserine. LRR repeat units follow at residues 1128 to 1154 (ATTL…VCLN), 1187 to 1210 (PADL…VKDK), and 1257 to 1282 (HRVI…DYRA). Phosphoserine occurs at positions 1367 and 1376. LRR repeat units follow at residues 1579–1602 (QQEL…IQNH) and 1629–1653 (LTAL…TREA). Spectrin repeat units follow at residues 1816–1891 (ELQK…NFEE) and 1933–2041 (QYQQ…ALLQ). Phosphoserine is present on serine 1860. One copy of the LRR 11 repeat lies at 1869 to 1891 (KGDLRFVTISGQKVLETENNFEE). 2 LRR repeats span residues 2058-2083 (LQSM…LIQE) and 2194-2220 (IQEL…ALGS). The Spectrin 3 repeat unit spans residues 2399 to 2507 (RMEEVQKEAS…TVARQKQLEE (109 aa)). A phosphoserine mark is found at serine 2429 and serine 2454. LRR repeat units lie at residues 2444–2467 (KAFL…LAGL), 2534–2557 (GVLG…QFML), and 2702–2725 (KKRL…RMNR). 2 Spectrin repeats span residues 2733-2837 (TQQF…SRLK) and 2842-2945 (KAQK…SLEE). Phosphoserine occurs at positions 2769 and 2895. LRR repeat units follow at residues 2984–3009 (NKNL…YLRD), 3105–3127 (NKIQ…MLEE), and 3214–3237 (KEQV…LIQS). Spectrin repeat units follow at residues 3169-3274 (EDFY…QLQE), 3281-3383 (KFQD…QLED), 3388-3491 (AKQF…SLLE), 3714-3818 (RSQQ…ARLE), 3825-3927 (NQFW…ALDE), 4047-4152 (LAEK…KLED), 4157-4261 (AVQY…HKLE), 4267-4370 (LGQF…QQLQ), 4375-4481 (QAQG…KLEE), 4486-4589 (ATEF…RSLD), 4594-4700 (RAKQ…KLEE), 4707-4808 (QFMD…RLEQ), and 4812-4916 (QAEE…QRLE). A Phosphothreonine modification is found at threonine 3368. 2 LRR repeats span residues 3737-3761 (MALG…AFSI) and 3846-3870 (AQLP…QLRE). At serine 4074 the chain carries Phosphoserine. The residue at position 4252 (lysine 4252) is an N6-acetyllysine. One copy of the LRR 22 repeat lies at 4538–4561 (RDQIIELDQTGNQLKFLSQKQDVV). A disordered region spans residues 4993–5023 (PTHAPFIEKSRSGSRKSLNQPTPPPMPILSQ). Residue serine 5009 is modified to Phosphoserine. 2 EF-hand domains span residues 5083–5118 (HKKS…SKFP) and 5119–5154 (TTKL…NKDA). Aspartate 5096, aspartate 5098, aspartate 5100, lysine 5102, glutamate 5107, aspartate 5132, aspartate 5134, aspartate 5136, tyrosine 5138, and glutamate 5143 together coordinate Ca(2+). The GAR domain occupies 5159–5231 (TDADKIEDEV…EFLVKNDPCR (73 aa)). Residues 5159–5430 (TDADKIEDEV…ASPRTPCPKR (272 aa)) are C-terminal tail. Residues 5247–5430 (PEGASQGMTP…ASPRTPCPKR (184 aa)) are disordered. Over residues 5267-5301 (SSRAASPTRSSSSASQSNHSCTSMPSSPATPASGT) the composition is skewed to low complexity. Residue threonine 5296 is modified to Phosphothreonine. Over residues 5317-5341 (TFHSSRTSLAGDTSNSSSPASTGAK) the composition is skewed to polar residues. A phosphoserine mark is found at serine 5321 and serine 5334. Positions 5352–5366 (SRPGSRAGSRAGSRA) are enriched in low complexity. The tract at residues 5355-5370 (GSRAGSRAGSRASSRR) is 4 X 4 AA tandem repeats of [GS]-S-R-[AR]. Phosphoserine occurs at positions 5372 and 5375. The span at 5381-5391 (ETQSACSDTSE) shows a compositional bias: polar residues. Positions 5392–5403 (SSAAGGQGSSRR) are enriched in low complexity.

Belongs to the plakin or cytolinker family. In terms of assembly, interacts with MAPRE1, CLASP1, CLASP2 and GOLGA4. Interacts with AXIN1 and LRP6. Found in a complex composed of MACF1, APC; AXIN1, CTNNB1 and GSK3B. Interacts with CAMSAP3. In terms of processing, phosphorylated on serine residues in the C-terminal tail by GSK3B. Phosphorylation inhibits microtubule-binding and this plays a critical role in bulge stem cell migration and skin wound repair. Wnt-signaling can repress phosphorylation.

It localises to the cytoplasm. It is found in the cytoskeleton. Its subcellular location is the golgi apparatus. The protein resides in the cell membrane. The protein localises to the cell projection. It localises to the ruffle membrane. It is found in the membrane. In terms of biological role, F-actin-binding protein which plays a role in cross-linking actin to other cytoskeletal proteins and also binds to microtubules. Plays an important role in ERBB2-dependent stabilization of microtubules at the cell cortex. Acts as a positive regulator of Wnt receptor signaling pathway and is involved in the translocation of AXIN1 and its associated complex (composed of APC, CTNNB1 and GSK3B) from the cytoplasm to the cell membrane. Has actin-regulated ATPase activity and is essential for controlling focal adhesions (FAs) assembly and dynamics. Interaction with CAMSAP3 at the minus ends of non-centrosomal microtubules tethers microtubules minus-ends to actin filaments, regulating focal adhesion size and cell migration. May play role in delivery of transport vesicles containing GPI-linked proteins from the trans-Golgi network through its interaction with GOLGA4. Plays a key role in wound healing and epidermal cell migration. Required for efficient upward migration of bulge cells in response to wounding and this function is primarily rooted in its ability to coordinate microtubule dynamics and polarize hair follicle stem cells. As a regulator of actin and microtubule arrangement and stabilization, it plays an essential role in neurite outgrowth, branching and spine formation during brain development. The sequence is that of Microtubule-actin cross-linking factor 1 from Rattus norvegicus (Rat).